The primary structure comprises 563 residues: Formate--tetrahydrofolate ligase (563 aa).

Residue 65 to 72 (TPLGEGKT) coordinates ATP.

It belongs to the formate--tetrahydrofolate ligase family.

It carries out the reaction (6S)-5,6,7,8-tetrahydrofolate + formate + ATP = (6R)-10-formyltetrahydrofolate + ADP + phosphate. The protein operates within one-carbon metabolism; tetrahydrofolate interconversion. In Cutibacterium acnes (strain DSM 16379 / KPA171202) (Propionibacterium acnes), this protein is Formate--tetrahydrofolate ligase.